The chain runs to 108 residues: Nucleoid-associated protein Mpe_A2533 (108 aa).

Residues T86 to F108 form a disordered region. The span at P99 to F108 shows a compositional bias: pro residues.

It belongs to the YbaB/EbfC family. In terms of assembly, homodimer.

It localises to the cytoplasm. Its subcellular location is the nucleoid. Its function is as follows. Binds to DNA and alters its conformation. May be involved in regulation of gene expression, nucleoid organization and DNA protection. The protein is Nucleoid-associated protein Mpe_A2533 of Methylibium petroleiphilum (strain ATCC BAA-1232 / LMG 22953 / PM1).